Here is a 508-residue protein sequence, read N- to C-terminus: Ribonuclease Y (508 aa).

The helical transmembrane segment at 1-21 (MMLWYIVAGAGGLLIGYLIAN) threads the bilayer. The KH domain maps to 198-283 (TVSTVSLPSD…EMYEKAKQEV (86 aa)). Residues 324–417 (VLNHSIEVAL…VAAADALSAA (94 aa)) form the HD domain.

Belongs to the RNase Y family.

Its subcellular location is the cell membrane. Endoribonuclease that initiates mRNA decay. This is Ribonuclease Y from Thermotoga maritima (strain ATCC 43589 / DSM 3109 / JCM 10099 / NBRC 100826 / MSB8).